A 213-amino-acid chain; its full sequence is Glutathione S-transferase APIC (213 aa).

Residues M1 to G82 form the GST N-terminal domain. Glutathione contacts are provided by residues S11, T12–A13, H40–K41, Q53–V54, and E66–S67. Positions D89–K213 constitute a GST C-terminal domain.

The protein belongs to the GST superfamily. Phi family.

The catalysed reaction is RX + glutathione = an S-substituted glutathione + a halide anion + H(+). In terms of biological role, conjugation of reduced glutathione to a wide number of exogenous and endogenous hydrophobic electrophiles. The sequence is that of Glutathione S-transferase APIC from Nicotiana tabacum (Common tobacco).